The primary structure comprises 165 residues: MKSVITTVVGAADSASRFPSASDMESVQGSIQRAAARLEAAEKLAGNYDQVAQEAVDAVYNQYPNGATGRQPRKCATEGKEKCKRDFVHYLRLINYCLVTGGTGPLDELAINGQKEVYKALSIDAGTYVAGFSHLRSRGCAPRDMSAQALTAYNQLLDYVINSLG.

The phycourobilin site is built by Cys-75, Cys-83, and Cys-140.

It belongs to the phycobiliprotein family. As to quaternary structure, heterodimer of an alpha and a beta chain. Post-translationally, contains three covalently linked phycourobilin chromophores.

Its subcellular location is the cellular thylakoid membrane. Functionally, light-harvesting photosynthetic bile pigment-protein from the phycobiliprotein complex. The polypeptide is C-phycoerythrin class 2 subunit alpha (mpeA) (Synechococcus sp. (strain WH8103)).